The sequence spans 220 residues: Octanoyltransferase (220 aa).

The BPL/LPL catalytic domain maps to glycine 29–proline 217. Substrate-binding positions include arginine 68–histidine 75, alanine 148–glycine 150, and glycine 161–serine 163. The active-site Acyl-thioester intermediate is the cysteine 179.

It belongs to the LipB family.

The protein resides in the cytoplasm. The enzyme catalyses octanoyl-[ACP] + L-lysyl-[protein] = N(6)-octanoyl-L-lysyl-[protein] + holo-[ACP] + H(+). It functions in the pathway protein modification; protein lipoylation via endogenous pathway; protein N(6)-(lipoyl)lysine from octanoyl-[acyl-carrier-protein]: step 1/2. Catalyzes the transfer of endogenously produced octanoic acid from octanoyl-acyl-carrier-protein onto the lipoyl domains of lipoate-dependent enzymes. Lipoyl-ACP can also act as a substrate although octanoyl-ACP is likely to be the physiological substrate. This is Octanoyltransferase from Dinoroseobacter shibae (strain DSM 16493 / NCIMB 14021 / DFL 12).